Consider the following 179-residue polypeptide: Transthyretin-like protein 46 (179 aa).

The first 17 residues, 1-17, serve as a signal peptide directing secretion; it reads MNKLFVLLIALLGLTAA. The tract at residues 144 to 179 is disordered; that stretch reads RRGGFNADYMDPDNSEKDQSKSSEESEDKEKTVETF. A compositionally biased stretch (basic and acidic residues) spans 157 to 179; the sequence is NSEKDQSKSSEESEDKEKTVETF.

The protein belongs to the nematode transthyretin-like family.

It is found in the secreted. The chain is Transthyretin-like protein 46 (ttr-46) from Caenorhabditis elegans.